Consider the following 361-residue polypeptide: Phosphoserine aminotransferase (361 aa).

An L-glutamate-binding site is contributed by Arg-42. Pyridoxal 5'-phosphate is bound by residues Ala-76–Arg-77, Trp-102, Thr-153, Asp-173, and Gln-196. At Lys-197 the chain carries N6-(pyridoxal phosphate)lysine. Asn-238–Thr-239 serves as a coordination point for pyridoxal 5'-phosphate.

This sequence belongs to the class-V pyridoxal-phosphate-dependent aminotransferase family. SerC subfamily. Homodimer. Pyridoxal 5'-phosphate is required as a cofactor.

The protein resides in the cytoplasm. The catalysed reaction is O-phospho-L-serine + 2-oxoglutarate = 3-phosphooxypyruvate + L-glutamate. It catalyses the reaction 4-(phosphooxy)-L-threonine + 2-oxoglutarate = (R)-3-hydroxy-2-oxo-4-phosphooxybutanoate + L-glutamate. Its pathway is amino-acid biosynthesis; L-serine biosynthesis; L-serine from 3-phospho-D-glycerate: step 2/3. It functions in the pathway cofactor biosynthesis; pyridoxine 5'-phosphate biosynthesis; pyridoxine 5'-phosphate from D-erythrose 4-phosphate: step 3/5. Catalyzes the reversible conversion of 3-phosphohydroxypyruvate to phosphoserine and of 3-hydroxy-2-oxo-4-phosphonooxybutanoate to phosphohydroxythreonine. The polypeptide is Phosphoserine aminotransferase (Yersinia enterocolitica serotype O:8 / biotype 1B (strain NCTC 13174 / 8081)).